A 120-amino-acid chain; its full sequence is Spermidine export protein MdtJ (120 aa).

The next 4 helical transmembrane spans lie at 1–21, 31–51, 54–74, and 81–101; these read MFYW…TLSM, AGFI…SFAV, IALG…ITIF, and EALS…IVLI.

The protein belongs to the drug/metabolite transporter (DMT) superfamily. Small multidrug resistance (SMR) (TC 2.A.7.1) family. MdtJ subfamily. As to quaternary structure, forms a complex with MdtI.

The protein resides in the cell inner membrane. Its function is as follows. Catalyzes the excretion of spermidine. This chain is Spermidine export protein MdtJ, found in Salmonella choleraesuis (strain SC-B67).